The primary structure comprises 224 residues: Response regulator protein GraR (224 aa).

Residues 2-115 (QILLVEDDNT…VLIAKLQAIY (114 aa)) enclose the Response regulatory domain. 4-aspartylphosphate is present on aspartate 51. Positions 126-224 (KRTLTWQDAI…KVGKGYMAHE (99 aa)) form a DNA-binding region, ompR/PhoB-type. Phosphothreonine occurs at positions 128, 130, and 149.

As to quaternary structure, interacts with GraX. Post-translationally, phosphorylated by GraS. Phosphorylated by Stk1; phosphorylation increases the DNA-binding activity of GraR.

The protein resides in the cytoplasm. Member of the two-component regulatory system GraR/GraS involved in resistance against cationic antimicrobial peptides (CAMPs). Upon phosphorylation by GraS, functions as a transcription regulator by direct binding to promoter regions of target genes such as adhesins, exoproteins, transporters, toxins, and proteins involved in cell wall synthesis. Down-regulates the expression of many genes involved in RNA and amino acid synthesis or glycolysis. The sequence is that of Response regulator protein GraR (graR) from Staphylococcus aureus (strain bovine RF122 / ET3-1).